Here is a 173-residue protein sequence, read N- to C-terminus: NADH-quinone oxidoreductase subunit B 2 (173 aa).

4 residues coordinate [4Fe-4S] cluster: cysteine 42, cysteine 43, cysteine 107, and cysteine 137.

Belongs to the complex I 20 kDa subunit family. In terms of assembly, NDH-1 is composed of 14 different subunits. Subunits NuoB, C, D, E, F, and G constitute the peripheral sector of the complex. Requires [4Fe-4S] cluster as cofactor.

The protein localises to the cell inner membrane. The enzyme catalyses a quinone + NADH + 5 H(+)(in) = a quinol + NAD(+) + 4 H(+)(out). NDH-1 shuttles electrons from NADH, via FMN and iron-sulfur (Fe-S) centers, to quinones in the respiratory chain. Couples the redox reaction to proton translocation (for every two electrons transferred, four hydrogen ions are translocated across the cytoplasmic membrane), and thus conserves the redox energy in a proton gradient. The protein is NADH-quinone oxidoreductase subunit B 2 of Anaeromyxobacter dehalogenans (strain 2CP-C).